The primary structure comprises 123 residues: Large ribosomal subunit protein eL8 (123 aa).

It belongs to the eukaryotic ribosomal protein eL8 family. Part of the 50S ribosomal subunit. Probably part of the RNase P complex.

It is found in the cytoplasm. Its function is as follows. Multifunctional RNA-binding protein that recognizes the K-turn motif in ribosomal RNA, the RNA component of RNase P, box H/ACA, box C/D and box C'/D' sRNAs. The protein is Large ribosomal subunit protein eL8 of Methanobrevibacter smithii (strain ATCC 35061 / DSM 861 / OCM 144 / PS).